Here is a 241-residue protein sequence, read N- to C-terminus: MILYVPKSFSISAPISDIHLQSVLETKNTFHNNNEKLGYILGLSFGNYVNQTFEKQKKIGIELDRNSLLKGIQDAISGNLKLSHQDISSGLKELEKKLKHATKIQLKKNAKENFIQGELYMKNFSKLKGVKKTSSGLLYLLERAGEGEALKDETKITVHYKGTLINGLEFDNSYKRGRPVSLRLKDVILGWKEGLKYIKKGGKIKLVIPPNLAYGTEEVNGIPANSTLIFDIELLDVVNGV.

One can recognise a PPIase FKBP-type domain in the interval 153–241 (ETKITVHYKG…IELLDVVNGV (89 aa)).

It belongs to the FKBP-type PPIase family.

The catalysed reaction is [protein]-peptidylproline (omega=180) = [protein]-peptidylproline (omega=0). Functionally, PPIases accelerate the folding of proteins. It catalyzes the cis-trans isomerization of proline imidic peptide bonds in oligopeptides. The chain is FKBP-type peptidyl-prolyl cis-trans isomerase FkpA (fkpA) from Buchnera aphidicola subsp. Acyrthosiphon pisum (strain APS) (Acyrthosiphon pisum symbiotic bacterium).